The following is a 530-amino-acid chain: uncharacterized protein (530 aa).

This is an uncharacterized protein from Acanthamoeba polyphaga (Amoeba).